The sequence spans 555 residues: Protein FAM234A (555 aa).

Residues 1-22 (MMDNKDLEAEIHPLKNEDKKSQ) are compositionally biased toward basic and acidic residues. The disordered stretch occupies residues 1–40 (MMDNKDLEAEIHPLKNEDKKSQENPGNLPRNEDNLKSKPV). Topologically, residues 1–49 (MMDNKDLEAEIHPLKNEDKKSQENPGNLPRNEDNLKSKPVPSRLSRCRT) are cytoplasmic. Ser21 carries the phosphoserine modification. Residues 50–70 (VAFFLSLFTCLFVVFVLSFII) form a helical; Signal-anchor for type II membrane protein membrane-spanning segment. Residues 71 to 555 (PCPDRPSSQG…FSRLRYRSEM (485 aa)) lie on the Extracellular side of the membrane. N-linked (GlcNAc...) asparagine glycans are attached at residues Asn116, Asn120, Asn317, Asn392, and Asn476.

The protein belongs to the FAM234 family.

It is found in the membrane. This Mus musculus (Mouse) protein is Protein FAM234A.